The sequence spans 36 residues: Photosystem II reaction center protein X (36 aa).

Residues leucine 9–isoleucine 29 form a helical membrane-spanning segment.

This sequence belongs to the PsbX family. Type 1 subfamily. In terms of assembly, PSII is composed of 1 copy each of membrane proteins PsbA, PsbB, PsbC, PsbD, PsbE, PsbF, PsbH, PsbI, PsbJ, PsbK, PsbL, PsbM, PsbT, PsbX, Psb30/Ycf12, peripheral proteins PsbO, CyanoQ (PsbQ), PsbU, PsbV and a large number of cofactors. It forms dimeric complexes.

The protein localises to the cell inner membrane. In terms of biological role, involved in the binding and/or turnover of quinones at the Q(B) site of photosystem II (PSII). PSII is a light-driven water plastoquinone oxidoreductase, using light energy to abstract electrons from H(2)O, generating a proton gradient subsequently used for ATP formation. This chain is Photosystem II reaction center protein X, found in Gloeobacter violaceus (strain ATCC 29082 / PCC 7421).